We begin with the raw amino-acid sequence, 256 residues long: MTKFWIGTSWKMNKTLAEARLFAEALKAADAGRSPDIQRFVIPPFTAVREVKEILSGTSVKVGAQNMHWADQGAWTGEISPLMLKDCNLDIVELGHSERREHFGETNETVGLKVEAAVRHGLIPLICIGETLEDRESGRAAAVLEEEVRGALSKLSEAQKQAEILFAYEPVWAIGENGIPASADYADARQAEIIAVAQSVLARRVPCLYGGSVNPGNCEELIACPHIDGLFIGRSAWNVEGYLDILARCATKVQAN.

The active-site Electrophile is the His-96. The active-site Proton acceptor is the Glu-169. 2 residues coordinate substrate: Gly-175 and Ser-212.

This sequence belongs to the triosephosphate isomerase family. In terms of assembly, homodimer.

The protein resides in the cytoplasm. It carries out the reaction L-erythrulose 1-phosphate = D-erythrulose 4-phosphate. It functions in the pathway carbohydrate metabolism; erythritol degradation. Its function is as follows. Catalyzes the isomerization of D-erythrulose-4P to L-erythrulose-1P. Involved in the degradation pathway of erythritol, that allows B.abortus to grow on this compound as the sole carbon source. The protein is L-erythrulose-1-phosphate isomerase of Brucella abortus (strain 2308).